The primary structure comprises 329 residues: Ketol-acid reductoisomerase (NADP(+)) (329 aa).

One can recognise a KARI N-terminal Rossmann domain in the interval 1 to 181 (MKVYYEQDAN…GGTRSGVIET (181 aa)). NADP(+) is bound by residues 24–27 (YGSQ), Arg47, and 82–85 (DQYQ). The active site involves His107. Residue Gly133 participates in NADP(+) binding. A KARI C-terminal knotted domain is found at 182–327 (TFREETETDL…ARLRSMMPWL (146 aa)). Mg(2+) is bound by residues Asp190, Glu194, Glu226, and Glu230. Ser251 serves as a coordination point for substrate.

It belongs to the ketol-acid reductoisomerase family. Mg(2+) is required as a cofactor.

The catalysed reaction is (2R)-2,3-dihydroxy-3-methylbutanoate + NADP(+) = (2S)-2-acetolactate + NADPH + H(+). The enzyme catalyses (2R,3R)-2,3-dihydroxy-3-methylpentanoate + NADP(+) = (S)-2-ethyl-2-hydroxy-3-oxobutanoate + NADPH + H(+). It functions in the pathway amino-acid biosynthesis; L-isoleucine biosynthesis; L-isoleucine from 2-oxobutanoate: step 2/4. It participates in amino-acid biosynthesis; L-valine biosynthesis; L-valine from pyruvate: step 2/4. Involved in the biosynthesis of branched-chain amino acids (BCAA). Catalyzes an alkyl-migration followed by a ketol-acid reduction of (S)-2-acetolactate (S2AL) to yield (R)-2,3-dihydroxy-isovalerate. In the isomerase reaction, S2AL is rearranged via a Mg-dependent methyl migration to produce 3-hydroxy-3-methyl-2-ketobutyrate (HMKB). In the reductase reaction, this 2-ketoacid undergoes a metal-dependent reduction by NADPH to yield (R)-2,3-dihydroxy-isovalerate. The protein is Ketol-acid reductoisomerase (NADP(+)) of Oleidesulfovibrio alaskensis (strain ATCC BAA-1058 / DSM 17464 / G20) (Desulfovibrio alaskensis).